A 397-amino-acid polypeptide reads, in one-letter code: 1-deoxy-D-xylulose 5-phosphate reductoisomerase (397 aa).

NADPH is bound by residues T12, G13, S14, I15, G38, K39, N40, and N126. K127 is a binding site for 1-deoxy-D-xylulose 5-phosphate. NADPH is bound at residue E128. D152 contributes to the Mn(2+) binding site. S153, E154, S188, and H211 together coordinate 1-deoxy-D-xylulose 5-phosphate. Position 154 (E154) interacts with Mn(2+). An NADPH-binding site is contributed by G217. The 1-deoxy-D-xylulose 5-phosphate site is built by S224, N229, K230, and E233. E233 lines the Mn(2+) pocket.

This sequence belongs to the DXR family. The cofactor is Mg(2+). Mn(2+) serves as cofactor.

It carries out the reaction 2-C-methyl-D-erythritol 4-phosphate + NADP(+) = 1-deoxy-D-xylulose 5-phosphate + NADPH + H(+). The protein operates within isoprenoid biosynthesis; isopentenyl diphosphate biosynthesis via DXP pathway; isopentenyl diphosphate from 1-deoxy-D-xylulose 5-phosphate: step 1/6. Catalyzes the NADPH-dependent rearrangement and reduction of 1-deoxy-D-xylulose-5-phosphate (DXP) to 2-C-methyl-D-erythritol 4-phosphate (MEP). This is 1-deoxy-D-xylulose 5-phosphate reductoisomerase from Haemophilus influenzae (strain PittEE).